Reading from the N-terminus, the 408-residue chain is WD repeat-containing protein JIP5 (408 aa).

WD repeat units lie at residues 5–44 (PVGS…DSHN), 50–86 (PSKR…TTDI), 87–130 (DARS…SVKT), 133–172 (QHFD…PKVV), 177–216 (DQED…GDCV), and 221–267 (GHPL…FLGV). The interval 311 to 408 (VDSDEEEDDE…VIDKDFFDGL (98 aa)) is disordered. 2 stretches are compositionally biased toward acidic residues: residues 313 to 339 (SDEE…EDEE) and 356 to 366 (DESDDEDEEME). Residues 396 to 408 (KETVIDKDFFDGL) are compositionally biased toward basic and acidic residues.

It belongs to the WD repeat WDR55 family.

The protein localises to the nucleus. It is found in the nucleolus. This Coprinopsis cinerea (strain Okayama-7 / 130 / ATCC MYA-4618 / FGSC 9003) (Inky cap fungus) protein is WD repeat-containing protein JIP5 (JIP5).